The chain runs to 65 residues: SPbeta prophage-derived uncharacterized protein YopU (65 aa).

The sequence is that of SPbeta prophage-derived uncharacterized protein YopU (yopU) from Bacillus subtilis (strain 168).